The primary structure comprises 276 residues: 2-hydroxy-6-oxo-2,4-heptadienoate hydrolase (276 aa).

The AB hydrolase-1 domain maps to 28–259 (NPVVLVHGSG…GRCGHWVQIE (232 aa)). Active-site residues include Ser105, Asp226, and His254.

The protein belongs to the DmpD/TodF/XylF esterase family.

It carries out the reaction (2Z,4E)-2-hydroxy-6-oxohepta-2,4-dienoate + H2O = (2Z)-2-hydroxypenta-2,4-dienoate + acetate + H(+). Its pathway is xenobiotic degradation; toluene degradation. Catalyzes the hydrolysis of 2-hydroxy-6-oxohepta-2,4-dienoate into 2-hydroxypenta-2,4-dienoate and acetate. The sequence is that of 2-hydroxy-6-oxo-2,4-heptadienoate hydrolase (todF) from Pseudomonas putida (strain ATCC 700007 / DSM 6899 / JCM 31910 / BCRC 17059 / LMG 24140 / F1).